We begin with the raw amino-acid sequence, 189 residues long: Anaphase-promoting complex subunit 10 (189 aa).

The region spanning 2–187 (AQIRQEALKK…TSLQFISRNQ (186 aa)) is the DOC domain.

The protein belongs to the APC10 family. The APC/C is composed of at least 13 subunits: apc1, apc2, nuc2, apc4, apc5, cut9, apc8, apc10, apc11, hcn1, apc13, apc14 and apc15. Interacts with nuc2.

In terms of biological role, component of the anaphase-promoting complex/cyclosome (APC/C), a cell cycle-regulated E3 ubiquitin-protein ligase complex that controls progression through mitosis and the G1 phase of the cell cycle. The APC/C is thought to confer substrate specificity and, in the presence of ubiquitin-conjugating E2 enzymes, it catalyzes the formation of protein-ubiquitin conjugates that are subsequently degraded by the 26S proteasome. Acts as a positive regulator of the anaphase promoting complex (APC)-cyclosome. Involved in G1 cell cycle arrest in response to nitrogen starvation. Required for ubiquitination and degradation of the mitotic B-type cyclin, cdc13. The chain is Anaphase-promoting complex subunit 10 (apc10) from Schizosaccharomyces pombe (strain 972 / ATCC 24843) (Fission yeast).